The sequence spans 77 residues: Acyl carrier protein (77 aa).

One can recognise a Carrier domain in the interval 1-76 (MAVFEDVRDV…DVVNYIEKLG (76 aa)). Serine 36 carries the O-(pantetheine 4'-phosphoryl)serine modification.

This sequence belongs to the acyl carrier protein (ACP) family. In terms of processing, 4'-phosphopantetheine is transferred from CoA to a specific serine of apo-ACP by AcpS. This modification is essential for activity because fatty acids are bound in thioester linkage to the sulfhydryl of the prosthetic group.

It localises to the cytoplasm. Its pathway is lipid metabolism; fatty acid biosynthesis. Its function is as follows. Carrier of the growing fatty acid chain in fatty acid biosynthesis. The polypeptide is Acyl carrier protein (Campylobacter concisus (strain 13826)).